The primary structure comprises 384 residues: MAP kinase-activated protein kinase 3 (384 aa).

Position 1 is an N-acetylmethionine (M1). Positions 1–33 (MDGETAGEKGSLVPQPGALGAPALGGAPAPGVR) are disordered. Low complexity predominate over residues 14–31 (PQPGALGAPALGGAPAPG). In terms of domain architecture, Protein kinase spans 46–306 (QLSKQVLGLG…IMQFMNHPWI (261 aa)). ATP-binding positions include 52–60 (LGLGVNGKV) and K75. Residue D168 is the Proton acceptor of the active site. Position 203 is a phosphothreonine; by MAPK14 (T203). S253 carries the phosphoserine; by MAPK14 modification. A Phosphoserine; by autocatalysis modification is found at S309. An autoinhibitory helix region spans residues 309–345 (SMEVPQTPLHTARVLEEDKDHWDDVKEEMTSALATMR). A Phosphothreonine; by MAPK14 modification is found at T315. The Nuclear export signal (NES) signature appears at 337-346 (MTSALATMRV). The tract at residues 347–371 (DYDQVKIKDLKTSNNRLLNKRRKKQ) is p38 MAPK-binding site. 2 short sequence motifs (bipartite nuclear localization signal) span residues 352 to 355 (KIKD) and 366 to 370 (KRRKK). The tract at residues 359–384 (SNNRLLNKRRKKQGGSSSASPGCNNQ) is disordered. Polar residues predominate over residues 372–384 (GGSSSASPGCNNQ).

Belongs to the protein kinase superfamily. CAMK Ser/Thr protein kinase family. Heterodimer with p38-alpha/MAPK14. The heterodimer with p38-alpha/MAPK14 forms a stable complex: molecules are positioned 'face to face' so that the ATP-binding sites of both kinases are at the heterodimer interface. Interacts with TCF3 and with polycomb proteins, such as PCH2 and BMI1/PCGF4. In terms of processing, phosphorylated and activated by MAPK1/ERK2 and MAPK3/ERK1. Phosphorylated and activated by MAP kinase p38-alpha/MAPK14 at Thr-203, Ser-253 and Thr-315.

Its subcellular location is the nucleus. It localises to the cytoplasm. It carries out the reaction L-seryl-[protein] + ATP = O-phospho-L-seryl-[protein] + ADP + H(+). The enzyme catalyses L-threonyl-[protein] + ATP = O-phospho-L-threonyl-[protein] + ADP + H(+). Activated following phosphorylation by p38-alpha/MAPK14 following various stresses. Inhibited by ligand 5B (2'-[2-(1,3-benzodioxol-5-yl)pyrimidin-4-yl]-5',6'-dihydrospiro[piperidine-4,7'-pyrrolo[3,2-c]pyridin]- 4'(1'h)-one) and ligand P4O (2-[2-(2-fluorophenyl)pyridin-4-yl]-1,5,6,7-tetrahydro- 4h-pyrrolo[3,2-c]pyridin-4-one), 2 ATP-competitive inhibitors. Functionally, stress-activated serine/threonine-protein kinase involved in cytokines production, endocytosis, cell migration, chromatin remodeling and transcriptional regulation. Following stress, it is phosphorylated and activated by MAP kinase p38-alpha/MAPK14, leading to phosphorylation of substrates. Phosphorylates serine in the peptide sequence, Hyd-X-R-X(2)-S, where Hyd is a large hydrophobic residue. MAPKAPK2 and MAPKAPK3, share the same function and substrate specificity, but MAPKAPK3 kinase activity and level in protein expression are lower compared to MAPKAPK2. Phosphorylates HSP27/HSPB1, KRT18, KRT20, RCSD1, RPS6KA3, TAB3 and TTP/ZFP36. Mediates phosphorylation of HSP27/HSPB1 in response to stress, leading to dissociate HSP27/HSPB1 from large small heat-shock protein (sHsps) oligomers and impair their chaperone activities and ability to protect against oxidative stress effectively. Involved in inflammatory response by regulating tumor necrosis factor (TNF) and IL6 production post-transcriptionally: acts by phosphorylating AU-rich elements (AREs)-binding proteins, such as TTP/ZFP36, leading to regulate the stability and translation of TNF and IL6 mRNAs. Phosphorylation of TTP/ZFP36, a major post-transcriptional regulator of TNF, promotes its binding to 14-3-3 proteins and reduces its ARE mRNA affinity leading to inhibition of dependent degradation of ARE-containing transcript. Involved in toll-like receptor signaling pathway (TLR) in dendritic cells: required for acute TLR-induced macropinocytosis by phosphorylating and activating RPS6KA3. Also acts as a modulator of Polycomb-mediated repression. In Rattus norvegicus (Rat), this protein is MAP kinase-activated protein kinase 3 (Mapkapk3).